Reading from the N-terminus, the 212-residue chain is 2-phospho-L-lactate guanylyltransferase (212 aa).

It belongs to the CofC family. Homodimer.

It carries out the reaction (2S)-2-phospholactate + GTP + H(+) = (2S)-lactyl-2-diphospho-5'-guanosine + diphosphate. Its pathway is cofactor biosynthesis; coenzyme F420 biosynthesis. Guanylyltransferase that catalyzes the activation of (2S)-2-phospholactate (2-PL) as (2S)-lactyl-2-diphospho-5'-guanosine, via the condensation of 2-PL with GTP. It is involved in the biosynthesis of coenzyme F420, a hydride carrier cofactor. In Methanocorpusculum labreanum (strain ATCC 43576 / DSM 4855 / Z), this protein is 2-phospho-L-lactate guanylyltransferase.